Consider the following 589-residue polypeptide: uncharacterized protein (589 aa).

The RRM domain occupies 242–314; sequence TALEVRNIPE…RFIKIFWYNP (73 aa). Disordered regions lie at residues 322-348, 443-465, and 566-589; these read PKKF…VDPA, ESPA…RGTN, and TSME…GRWR. Ser-330 is modified (phosphoserine). Residues 330–340 show a composition bias toward low complexity; the sequence is SPTTSDSSNVE. Thr-332 bears the Phosphothreonine mark. Ser-334 carries the post-translational modification Phosphoserine. The span at 566-579 shows a compositional bias: polar residues; the sequence is TSMETGESNTSDNM.

Its subcellular location is the nucleus. This is an uncharacterized protein from Schizosaccharomyces pombe (strain 972 / ATCC 24843) (Fission yeast).